Here is a 104-residue protein sequence, read N- to C-terminus: Protein ArtA (104 aa).

The polypeptide is Protein ArtA (artA) (Escherichia coli (strain K12)).